The sequence spans 297 residues: 4-hydroxy-tetrahydrodipicolinate synthase (297 aa).

A pyruvate-binding site is contributed by Thr47. Tyr135 functions as the Proton donor/acceptor in the catalytic mechanism. Lys163 serves as the catalytic Schiff-base intermediate with substrate. Ile205 serves as a coordination point for pyruvate.

This sequence belongs to the DapA family. As to quaternary structure, homotetramer; dimer of dimers.

The protein resides in the cytoplasm. The enzyme catalyses L-aspartate 4-semialdehyde + pyruvate = (2S,4S)-4-hydroxy-2,3,4,5-tetrahydrodipicolinate + H2O + H(+). It functions in the pathway amino-acid biosynthesis; L-lysine biosynthesis via DAP pathway; (S)-tetrahydrodipicolinate from L-aspartate: step 3/4. Its function is as follows. Catalyzes the condensation of (S)-aspartate-beta-semialdehyde [(S)-ASA] and pyruvate to 4-hydroxy-tetrahydrodipicolinate (HTPA). This is 4-hydroxy-tetrahydrodipicolinate synthase from Cytophaga hutchinsonii (strain ATCC 33406 / DSM 1761 / CIP 103989 / NBRC 15051 / NCIMB 9469 / D465).